Consider the following 637-residue polypeptide: Serine/threonine protein kinase ypkA (637 aa).

A compositionally biased stretch (low complexity) spans 20-29 (TFTRSSSTST). 2 disordered regions span residues 20–63 (TFTR…SLVS) and 104–140 (SSSV…INAA). A compositionally biased stretch (polar residues) spans 40–61 (VVSQTPSISSTNSNGINASESL). Residues 104–116 (SSSVRPSSSSSHS) are compositionally biased toward low complexity. Positions 117–136 (THGQTASFAQSGRPQSTSGG) are enriched in polar residues. In terms of domain architecture, Protein kinase spans 294–551 (FDLLKVVGKG…AAEIKSHHFF (258 aa)). Residues 300 to 308 (VGKGSFGKV) and K323 each bind ATP. D417 (proton acceptor) is an active-site residue. The region spanning 552–623 (ANIDWRKLLQ…NRPVAGLGDA (72 aa)) is the AGC-kinase C-terminal domain. 2 positions are modified to phosphoserine: S593 and S612. Y613 is subject to Phosphotyrosine.

This sequence belongs to the protein kinase superfamily. Ser/Thr protein kinase family. In terms of assembly, interacts with the sakA MAP kinase.

The catalysed reaction is L-seryl-[protein] + ATP = O-phospho-L-seryl-[protein] + ADP + H(+). It catalyses the reaction L-threonyl-[protein] + ATP = O-phospho-L-threonyl-[protein] + ADP + H(+). Its function is as follows. Serine/threonine protein kinase required for vegetative growth and conidiation. Important for fungal survival through the regulation of glycosphingolipid (GSL) biosynthesis and cross talks with MAP kinase pathways such as the cell wall integrity (CWI) and the high osmolarity glycerol (HOG) pathways. The sequence is that of Serine/threonine protein kinase ypkA from Aspergillus fumigatus (strain ATCC MYA-4609 / CBS 101355 / FGSC A1100 / Af293) (Neosartorya fumigata).